Here is a 185-residue protein sequence, read N- to C-terminus: UPF0200 protein Mevan_0592 (185 aa).

8-15 (GMPGSGKS) is a binding site for ATP.

Belongs to the UPF0200 family.

The polypeptide is UPF0200 protein Mevan_0592 (Methanococcus vannielii (strain ATCC 35089 / DSM 1224 / JCM 13029 / OCM 148 / SB)).